Here is a 327-residue protein sequence, read N- to C-terminus: Methionine import ATP-binding protein MetN (327 aa).

In terms of domain architecture, ABC transporter spans 3 to 239 (VELKNIEKIY…PKHAVTKELL (237 aa)). 36 to 43 (GYSGAGKS) is a binding site for ATP.

This sequence belongs to the ABC transporter superfamily. Methionine importer (TC 3.A.1.24) family. The complex is composed of two ATP-binding proteins (MetN), two transmembrane proteins (MetI) and a solute-binding protein (MetQ).

It is found in the cell inner membrane. It catalyses the reaction L-methionine(out) + ATP + H2O = L-methionine(in) + ADP + phosphate + H(+). It carries out the reaction D-methionine(out) + ATP + H2O = D-methionine(in) + ADP + phosphate + H(+). In terms of biological role, part of the ABC transporter complex MetNIQ involved in methionine import. Responsible for energy coupling to the transport system. This chain is Methionine import ATP-binding protein MetN, found in Helicobacter pylori (strain J99 / ATCC 700824) (Campylobacter pylori J99).